The following is a 940-amino-acid chain: MTTEDFPKAYNFQDTEPELYVFWEKNGMFKAEASSDKPPYSVIMPPPNVTGVLHMGHALVNTLQDVLVRYKRMSGFEVCWIPGTDHAGIATQAVVERHLQASEGKRRTDYSREDFLKHIWAWKEKSEKVVLSQLRQLGCSCDWDRKRFTMEPLANRAVKKAFKTLFENGYIYRGYYLVNWDPVLQTALADDEVEYEEKDGWLYYIRYRMVGSQESIVVATTRPETSLGDTGIAVSPNDERYASWIGASVEVPFVNRQIPIIGDASVDPTFGTGAVKVTPAHDKDDYLMGTNHHLPMINILTPSGGINENGGPFAGMAKEKAREEILIALEEQGLFVRKEPYKLRVGVSYRSGAVIEPYLSKQWFVSVSEFRGALREFVESQDIKIFPKDFVKNYLSWVNHLRDWCISRQLWWGHRIPVWYHKNDDERVLCYDGEGIPEEVAQDPDSWYQDPDVLDTWFSSGLWPLTCLGWPDENSPDLKKFYPTALLVTGHDILFFWVTRMVLLCSSMSGEKPFSEVFLHGLIFGKSYKRYNDFGEWSYISGKEKLAYDMGEALPDGVVAKWEKLSKSKGNVIDPLEMIATYGTDAVRLTLCSCANRGEQIDLDYRLFEEYKHFANKVWNGARFIFGHISDLQGKDLLAGIDEDSLGLEDFYILDGFNQLIHQLEEAYATYAFDKVATLAYEFFRNDLCSTYIEIIKPTLFGKQGNEASQSTKRTLLAVLLINVLGVLHPVAPFITESLFLRIQDTLGALPEGDGDAFTGHALRMLRSRACMEAPYPKAFDVKIPQDLRESFTLAQRLVYTIRNIRGEMQLDPRLHLKAFVVCSDTTEIQSCIPILQALGGLESIQLLDKEPEKGLYSFGVVDTIRLGIFVPEEHLLKEKGRLEKERVRLERAVENLERLLGDESFCQKANPNLVVAKQEALKNNRIELQGILDKLASFA.

The short motif at 47–57 (PNVTGVLHMGH) is the 'HIGH' region element. The short motif at 564–568 (KLSKS) is the 'KMSKS' region element. Residue Lys567 coordinates ATP. Positions 873 to 905 (EEHLLKEKGRLEKERVRLERAVENLERLLGDES) form a coiled coil.

Belongs to the class-I aminoacyl-tRNA synthetase family. ValS type 1 subfamily. In terms of assembly, monomer.

The protein localises to the cytoplasm. The enzyme catalyses tRNA(Val) + L-valine + ATP = L-valyl-tRNA(Val) + AMP + diphosphate. Its function is as follows. Catalyzes the attachment of valine to tRNA(Val). As ValRS can inadvertently accommodate and process structurally similar amino acids such as threonine, to avoid such errors, it has a 'posttransfer' editing activity that hydrolyzes mischarged Thr-tRNA(Val) in a tRNA-dependent manner. The sequence is that of Valine--tRNA ligase from Chlamydia pneumoniae (Chlamydophila pneumoniae).